Here is a 563-residue protein sequence, read N- to C-terminus: RUN and FYVE domain-containing protein 4 (563 aa).

An RUN domain is found at 33–166 (TETSAELHRL…VAFNLDLQRP (134 aa)). Disordered stretches follow at residues 176–327 (SESR…TTEG) and 375–397 (KKSSPTEKPQEWTGVTSGTMQED). Composition is skewed to basic and acidic residues over residues 196–205 (GFPEEVRCSR) and 263–284 (ETEREGFQLDQKDGGPKPRKFL). Residues 285–295 (ENSTASIQQQR) show a composition bias toward polar residues. Basic and acidic residues predominate over residues 297 to 312 (RAKDVKMQLTGRKVEG). The span at 385–396 (EWTGVTSGTMQE) shows a compositional bias: polar residues. Positions 421 to 462 (QAQCQEQLRAQEAELQALQEQLSRCQKERALLQVKLEQKQQE) form a coiled coil. The FYVE-type zinc-finger motif lies at 428 to 558 (LRAQEAELQA…RCCPTCAQQE (131 aa)). Residues Cys-513, Cys-516, Cys-529, Cys-532, Cys-537, Cys-540, Cys-551, and Cys-554 each contribute to the Zn(2+) site.

As to quaternary structure, forms homodimers (via coiled coil domain). Forms a ternary complex with RAB7A and LAMP2; the interaction with RAB7A is mediated by RUFY4 (via RUN and coiled coil domains). Interacts with GTP-, but not GDP-bound ARL8A and ARL8B. Interacts with dynactin/DCTN1 and the dynein intermediate chain DYNC1I1/2. In terms of tissue distribution, expressed in dendritic cells.

It localises to the cytoplasmic vesicle. The protein localises to the autophagosome. The protein resides in the lysosome. ARL8 effector that promotes the coupling of endolysosomes to dynein-dynactin for retrograde transport along microtubules. Acts by binding both GTP-bound ARL8 and dynein-dynactin. In nonneuronal cells, promotes concentration of endolysosomes in the juxtanuclear area. In hippocampal neurons, drives retrograde transport of endolysosomes from the axon to the soma. Positive regulator of macroautophagy in dendritic cells. Increases autophagic flux, probably by stimulating both autophagosome formation and facilitating tethering with lysosomes. Binds to phosphatidylinositol 3-phosphate (PtdIns3P) through its FYVE-type zinc finger. Positive regulator of osteosclast bone-resorbing activity, possibly by promoting late endosome-lysosome fusion by acting as an adapter protein between RAB7A on late endosomes and LAMP2 on primary lysosomes. The protein is RUN and FYVE domain-containing protein 4 (Rufy4) of Mus musculus (Mouse).